A 392-amino-acid chain; its full sequence is Cobalt-precorrin-5B C(1)-methyltransferase (392 aa).

This sequence belongs to the CbiD family.

The enzyme catalyses Co-precorrin-5B + S-adenosyl-L-methionine = Co-precorrin-6A + S-adenosyl-L-homocysteine. It functions in the pathway cofactor biosynthesis; adenosylcobalamin biosynthesis; cob(II)yrinate a,c-diamide from sirohydrochlorin (anaerobic route): step 6/10. In terms of biological role, catalyzes the methylation of C-1 in cobalt-precorrin-5B to form cobalt-precorrin-6A. The sequence is that of Cobalt-precorrin-5B C(1)-methyltransferase from Pelobacter propionicus (strain DSM 2379 / NBRC 103807 / OttBd1).